A 140-amino-acid chain; its full sequence is MAIYGIGTDIVQVSRVAAVMTRTNGRFAEKVLGPDELRVYHARHARSAARGLAFLATRFSAKEAFSKAIGLGMHWPMTWRALQTLNKPSGEPMVVASGELAEWLDARGITARVTISDERDYAVSFVIAETAQAGAADIAE.

Positions 9 and 63 each coordinate Mg(2+).

Belongs to the P-Pant transferase superfamily. AcpS family. It depends on Mg(2+) as a cofactor.

It is found in the cytoplasm. The catalysed reaction is apo-[ACP] + CoA = holo-[ACP] + adenosine 3',5'-bisphosphate + H(+). Its function is as follows. Transfers the 4'-phosphopantetheine moiety from coenzyme A to a Ser of acyl-carrier-protein. The chain is Holo-[acyl-carrier-protein] synthase from Paraburkholderia phytofirmans (strain DSM 17436 / LMG 22146 / PsJN) (Burkholderia phytofirmans).